A 332-amino-acid chain; its full sequence is Ferredoxin--NADP reductase 2 (332 aa).

Residues E37, Q45, Y50, V90, F124, D285, and T326 each contribute to the FAD site.

Belongs to the ferredoxin--NADP reductase type 2 family. In terms of assembly, homodimer. It depends on FAD as a cofactor.

It catalyses the reaction 2 reduced [2Fe-2S]-[ferredoxin] + NADP(+) + H(+) = 2 oxidized [2Fe-2S]-[ferredoxin] + NADPH. This chain is Ferredoxin--NADP reductase 2, found in Bacillus pumilus (strain SAFR-032).